The following is a 498-amino-acid chain: Excisase C (498 aa).

The Tyr recombinase domain maps to 263-446 (KIIYSFDLFE…FGIENRKKAF (184 aa)). Active-site residues include Arg-306, Lys-336, Arg-401, and His-424. Tyr-433 acts as the O-(3'-phospho-DNA)-tyrosine intermediate in catalysis.

Belongs to the XisA/XisC recombinase family.

In terms of biological role, essential for DNA excision. Site specific recombinase necessary for the excision of the 10.5 kb hupL element during heterocyst differentiation. The protein is Excisase C (xisC) of Nostoc sp. (strain PCC 7120 / SAG 25.82 / UTEX 2576).